A 61-amino-acid polypeptide reads, in one-letter code: Defensin BmKDfsin1 (61 aa).

An N-terminal signal peptide occupies residues 1–25; the sequence is MKTIVLLFVLVLVFALLVKMGMVEA. Disulfide bonds link Cys-29-Cys-50, Cys-36-Cys-58, and Cys-40-Cys-60.

It belongs to the invertebrate defensin family. Type 2 subfamily. As to expression, highly expressed in non-venom gland (hemolymph) and moderately expressed in venom gland.

It is found in the secreted. Functionally, antibacterial peptide active against Gram-positive bacteria, but not on Gram-negative bacteria. Also has weak blocking activity on Kv1.1/KCNA1, Kv1.2/KCNA2, Kv1.3/KCNA3, KCa3.1/KCNN4/IK, KCa2.3/KCNN3/SK3 and Kv11.1/KCNH2/ERG1 channels (tested at 1 uM). It inhibits potassium channel current by interacting with the pore region. This chain is Defensin BmKDfsin1, found in Olivierus martensii (Manchurian scorpion).